A 384-amino-acid chain; its full sequence is Probable fructokinase-6, chloroplastic (384 aa).

The transit peptide at 1–46 (MALQATTTTFCFSGPTFRSTPHSLTSKRPISIKATTSSPSRLSNSR) directs the protein to the chloroplast. A disordered region spans residues 34 to 61 (ATTSSPSRLSNSRSNLKGRALSSDGSTQ). A compositionally biased stretch (low complexity) spans 35 to 48 (TTSSPSRLSNSRSN).

It belongs to the carbohydrate kinase PfkB family.

Its subcellular location is the plastid. It localises to the chloroplast. The catalysed reaction is D-fructose + ATP = D-fructose 6-phosphate + ADP + H(+). The protein operates within glycan biosynthesis; starch biosynthesis. Its function is as follows. May play an important role in maintaining the flux of carbon towards starch formation. The polypeptide is Probable fructokinase-6, chloroplastic (Arabidopsis thaliana (Mouse-ear cress)).